Here is a 380-residue protein sequence, read N- to C-terminus: Queuine tRNA-ribosyltransferase (380 aa).

Residue D89 is the Proton acceptor of the active site. Substrate-binding positions include D89 to F93, D143, Q187, and G214. Residues G245–D251 are RNA binding. Residue D264 is the Nucleophile of the active site. Positions T269–R273 are RNA binding; important for wobble base 34 recognition. Zn(2+) contacts are provided by C302, C304, C307, and H333.

This sequence belongs to the queuine tRNA-ribosyltransferase family. In terms of assembly, homodimer. Within each dimer, one monomer is responsible for RNA recognition and catalysis, while the other monomer binds to the replacement base PreQ1. Requires Zn(2+) as cofactor.

It carries out the reaction 7-aminomethyl-7-carbaguanine + guanosine(34) in tRNA = 7-aminomethyl-7-carbaguanosine(34) in tRNA + guanine. It functions in the pathway tRNA modification; tRNA-queuosine biosynthesis. Its function is as follows. Catalyzes the base-exchange of a guanine (G) residue with the queuine precursor 7-aminomethyl-7-deazaguanine (PreQ1) at position 34 (anticodon wobble position) in tRNAs with GU(N) anticodons (tRNA-Asp, -Asn, -His and -Tyr). Catalysis occurs through a double-displacement mechanism. The nucleophile active site attacks the C1' of nucleotide 34 to detach the guanine base from the RNA, forming a covalent enzyme-RNA intermediate. The proton acceptor active site deprotonates the incoming PreQ1, allowing a nucleophilic attack on the C1' of the ribose to form the product. After dissociation, two additional enzymatic reactions on the tRNA convert PreQ1 to queuine (Q), resulting in the hypermodified nucleoside queuosine (7-(((4,5-cis-dihydroxy-2-cyclopenten-1-yl)amino)methyl)-7-deazaguanosine). The polypeptide is Queuine tRNA-ribosyltransferase (Proteus mirabilis (strain HI4320)).